A 304-amino-acid polypeptide reads, in one-letter code: Elongation factor Ts (304 aa).

The interval 80–83 is involved in Mg(2+) ion dislocation from EF-Tu; the sequence is TDFV.

Belongs to the EF-Ts family.

The protein resides in the cytoplasm. Associates with the EF-Tu.GDP complex and induces the exchange of GDP to GTP. It remains bound to the aminoacyl-tRNA.EF-Tu.GTP complex up to the GTP hydrolysis stage on the ribosome. This is Elongation factor Ts from Clostridium tetani (strain Massachusetts / E88).